The sequence spans 137 residues: Nucleoside diphosphate kinase (137 aa).

The ATP site is built by Lys-9, Phe-57, Arg-85, Thr-91, Arg-102, and Asn-112. Residue His-115 is the Pros-phosphohistidine intermediate of the active site.

This sequence belongs to the NDK family. Homotetramer. Mg(2+) serves as cofactor.

The protein localises to the cytoplasm. The catalysed reaction is a 2'-deoxyribonucleoside 5'-diphosphate + ATP = a 2'-deoxyribonucleoside 5'-triphosphate + ADP. It carries out the reaction a ribonucleoside 5'-diphosphate + ATP = a ribonucleoside 5'-triphosphate + ADP. Functionally, major role in the synthesis of nucleoside triphosphates other than ATP. The ATP gamma phosphate is transferred to the NDP beta phosphate via a ping-pong mechanism, using a phosphorylated active-site intermediate. The sequence is that of Nucleoside diphosphate kinase from Campylobacter jejuni subsp. jejuni serotype O:23/36 (strain 81-176).